The chain runs to 113 residues: Large ribosomal subunit protein bL19 (113 aa).

The protein belongs to the bacterial ribosomal protein bL19 family.

This protein is located at the 30S-50S ribosomal subunit interface and may play a role in the structure and function of the aminoacyl-tRNA binding site. The sequence is that of Large ribosomal subunit protein bL19 from Corynebacterium kroppenstedtii (strain DSM 44385 / JCM 11950 / CIP 105744 / CCUG 35717).